Here is a 197-residue protein sequence, read N- to C-terminus: Peptide deformylase (197 aa).

Positions 106 and 148 each coordinate Fe cation. The active site involves glutamate 149. Fe cation is bound at residue histidine 152.

Belongs to the polypeptide deformylase family. Fe(2+) is required as a cofactor.

The enzyme catalyses N-terminal N-formyl-L-methionyl-[peptide] + H2O = N-terminal L-methionyl-[peptide] + formate. Its function is as follows. Removes the formyl group from the N-terminal Met of newly synthesized proteins. Requires at least a dipeptide for an efficient rate of reaction. N-terminal L-methionine is a prerequisite for activity but the enzyme has broad specificity at other positions. In Mycobacterium bovis (strain ATCC BAA-935 / AF2122/97), this protein is Peptide deformylase.